Reading from the N-terminus, the 102-residue chain is MEKLQKMTSEKSLVIFSKNSCCMSHTIKTLFLDLGVNPTIYELDEINRGKEIEQALAQLGCSPTVPVVFIGGQLVGGANQVMSLHLNRSLIPMLKRVGALWL.

A Glutaredoxin domain is found at 1–101 (MEKLQKMTSE…PMLKRVGALW (101 aa)). Cys21 is a [2Fe-2S] cluster binding site. Residues 99 to 102 (ALWL) carry the Responsive for interaction with TGA factors motif.

This sequence belongs to the glutaredoxin family. CC-type subfamily.

The protein localises to the cytoplasm. It is found in the nucleus. May only reduce GSH-thiol disulfides, but not protein disulfides. In Arabidopsis thaliana (Mouse-ear cress), this protein is Monothiol glutaredoxin-S7 (GRXS7).